The sequence spans 621 residues: Auxin response factor 13 (621 aa).

The TF-B3 DNA-binding region spans 124 to 228; sequence FSKILTASDV…ELRFGIRRAK (105 aa). The 93-residue stretch at 508 to 600 folds into the PB1 domain; sequence RSRIKVHMQG…EIKKMKLKNK (93 aa).

The protein belongs to the ARF family. As to quaternary structure, homodimers and heterodimers.

The protein resides in the nucleus. In terms of biological role, auxin response factors (ARFs) are transcriptional factors that bind specifically to the DNA sequence 5'-TGTCTC-3' found in the auxin-responsive promoter elements (AuxREs). Could act as transcriptional activator or repressor. Formation of heterodimers with Aux/IAA proteins may alter their ability to modulate early auxin response genes expression. The sequence is that of Auxin response factor 13 (ARF13) from Arabidopsis thaliana (Mouse-ear cress).